A 147-amino-acid polypeptide reads, in one-letter code: Large ribosomal subunit protein uL11 (147 aa).

The protein belongs to the universal ribosomal protein uL11 family. In terms of assembly, part of the ribosomal stalk of the 50S ribosomal subunit. Interacts with L10 and the large rRNA to form the base of the stalk. L10 forms an elongated spine to which L12 dimers bind in a sequential fashion forming a multimeric L10(L12)X complex. In terms of processing, one or more lysine residues are methylated.

Functionally, forms part of the ribosomal stalk which helps the ribosome interact with GTP-bound translation factors. This is Large ribosomal subunit protein uL11 from Bacteroides thetaiotaomicron (strain ATCC 29148 / DSM 2079 / JCM 5827 / CCUG 10774 / NCTC 10582 / VPI-5482 / E50).